Reading from the N-terminus, the 1598-residue chain is Fatty acid synthase subunit alpha (1598 aa).

The segment at 96-134 (RTQPHKSSAPQEPVPKAAPKAAPPVPVATAPLPEPGRQV) is disordered. A compositionally biased stretch (low complexity) spans 104–115 (APQEPVPKAAPK). Residues 143 to 221 (DVPIQSRDVI…QIVSGSTSTT (79 aa)) enclose the Carrier domain. O-(pantetheine 4'-phosphoryl)serine is present on Ser-181. Residues 543 to 784 (LKGKTVLLTG…LAALLVNPFA (242 aa)) are ketoreductase (KR) domain. The tract at residues 818–844 (KQDSTSTPTHQHLPSHHHVDEPEIGKP) is disordered. Polar residues predominate over residues 820–829 (DSTSTPTHQH). One can recognise a Ketosynthase family 3 (KS3) domain in the interval 992 to 1524 (HEIVLTRDLA…QKGAQAIIVH (533 aa)). Residue Cys-1175 is the For beta-ketoacyl synthase activity of the active site. Positions 1280–1301 (ASDKTGRSVPSPGKGTLTNARE) are disordered. Active-site for beta-ketoacyl synthase activity residues include His-1409 and His-1450.

This sequence belongs to the thiolase-like superfamily. Fungal fatty acid synthetase subunit alpha family. In terms of assembly, fatty acid synthase is composed of alpha and beta subunits.

It catalyses the reaction acetyl-CoA + n malonyl-CoA + 2n NADPH + 4n H(+) = a long-chain-acyl-CoA + n CoA + n CO2 + 2n NADP(+).. The catalysed reaction is a fatty acyl-[ACP] + malonyl-[ACP] + H(+) = a 3-oxoacyl-[ACP] + holo-[ACP] + CO2. The enzyme catalyses a (3R)-hydroxyacyl-[ACP] + NADP(+) = a 3-oxoacyl-[ACP] + NADPH + H(+). It participates in mycotoxin biosynthesis. Functionally, fatty acid synthase subunit alpha; part of the gene cluster that mediates the biosynthesis of gramillins A and B, bicyclic lipopeptides that induce cell death in maize leaves but not in wheat leaves. The nonribosomal peptide synthetase GRA1 incorporates respectively a glutamic adic (Glu), a leucine (Leu), a serine (Ser), a hydroxyglutamine (HOGln), a 2-amino decanoic acid, and 2 cysteins (CysB and CysA). The biosynthesis of 2-amino decanoic acid incorporated in gramillins could be initiated by a fatty acid synthase composed of the alpha and beta subunits FGSG_00036 and FGSG_11656. The cytochrome P450 monooxygenase FGSG_15680 could hydroxylate the fatty acid chain. Subsequent oxidation to the ketone by the oxidoreductase FGSG_00048 and transamination by aminotransferase FGSG_00049 could form 2-amino-decanoic acid. On the other hand, FGSG_15680 could also be responsible for the HO-modified glutamine at the gamma-position. Whether hydroxylation occurs on the fully assembled product or on the Gln residue prior to assembly into the gramillins requires further proof. The thioredoxin FGSG_00043 could also be required for the disulfide-bond formation between CysA and CysB. The specific involvement of the remaining proteins from the cluster is more difficult to discern, but could have broader regulatory (FGSG_00040 and FGSG_11657) or enzymatic functions (FGSG_00044 and FGSG_00045). The final C-domain of GRA1 does not possess the expected sequence of a termination CT domain, often implicated in macrocyclization and release of a cyclopeptidein fungal NRPs; and the thioesterase FGSG_00047 may act in concert with the terminal C-domain of GRA1 to catalyze the formation of the macrocyclic anhydride and release of the products. The protein is Fatty acid synthase subunit alpha of Gibberella zeae (strain ATCC MYA-4620 / CBS 123657 / FGSC 9075 / NRRL 31084 / PH-1) (Wheat head blight fungus).